We begin with the raw amino-acid sequence, 74 residues long: Large ribosomal subunit protein bL31 (74 aa).

Residues cysteine 16, cysteine 18, cysteine 38, and cysteine 41 each coordinate Zn(2+).

It belongs to the bacterial ribosomal protein bL31 family. Type A subfamily. In terms of assembly, part of the 50S ribosomal subunit. Requires Zn(2+) as cofactor.

Functionally, binds the 23S rRNA. This Streptomyces griseus subsp. griseus (strain JCM 4626 / CBS 651.72 / NBRC 13350 / KCC S-0626 / ISP 5235) protein is Large ribosomal subunit protein bL31.